The sequence spans 259 residues: Protein CWC15 homolog (259 aa).

The interval 1-182 is disordered; sequence MTTAARPTFD…EKKQEDERIR (182 aa). Basic and acidic residues predominate over residues 52–71; it reads DENRNRDFRKELEEREREAR. Composition is skewed to low complexity over residues 72-82 and 114-126; these read SGTGATSSSSG and QQQA…QQAA. Residues 129-150 are compositionally biased toward acidic residues; the sequence is DADEPLDNDSSDSDSDSDDDDA. A coiled-coil region spans residues 150–182; the sequence is AALLAELQKIKQERLQETARRESEKKQEDERIR. A compositionally biased stretch (basic and acidic residues) spans 157-182; that stretch reads QKIKQERLQETARRESEKKQEDERIR.

It belongs to the CWC15 family.

Functionally, involved in pre-mRNA splicing. The polypeptide is Protein CWC15 homolog (c12.1) (Drosophila melanogaster (Fruit fly)).